The sequence spans 237 residues: 1-(5-phosphoribosyl)-5-[(5-phosphoribosylamino)methylideneamino] imidazole-4-carboxamide isomerase (237 aa).

Residue aspartate 8 is the Proton acceptor of the active site. Aspartate 128 functions as the Proton donor in the catalytic mechanism.

The protein belongs to the HisA/HisF family.

The protein resides in the cytoplasm. It catalyses the reaction 1-(5-phospho-beta-D-ribosyl)-5-[(5-phospho-beta-D-ribosylamino)methylideneamino]imidazole-4-carboxamide = 5-[(5-phospho-1-deoxy-D-ribulos-1-ylimino)methylamino]-1-(5-phospho-beta-D-ribosyl)imidazole-4-carboxamide. It functions in the pathway amino-acid biosynthesis; L-histidine biosynthesis; L-histidine from 5-phospho-alpha-D-ribose 1-diphosphate: step 4/9. The sequence is that of 1-(5-phosphoribosyl)-5-[(5-phosphoribosylamino)methylideneamino] imidazole-4-carboxamide isomerase from Gemmatimonas aurantiaca (strain DSM 14586 / JCM 11422 / NBRC 100505 / T-27).